We begin with the raw amino-acid sequence, 117 residues long: Immunoglobulin kappa variable 1D-17 (117 aa).

Residues 1 to 22 form the signal peptide; it reads MDMRVPAQLLGLLLLWFPGARC. The framework-1 stretch occupies residues 23 to 45; the sequence is NIQMTQSPSAMSASVGDRVTITC. Positions 23–117 constitute an Ig-like domain; sequence NIQMTQSPSA…YYCLQHNSYP (95 aa). Cys45 and Cys110 are oxidised to a cystine. The segment at 46–56 is complementarity-determining-1; it reads RARQGISNYLA. Residues 57-71 are framework-2; it reads WFQQKPGKVPKHLIY. Residues 72–78 form a complementarity-determining-2 region; sequence AASSLQS. The interval 79-110 is framework-3; sequence GVPSRFSGSGSGTEFTLTISSLQPEDFATYYC. Residues 111 to 117 form a complementarity-determining-3 region; the sequence is LQHNSYP.

Immunoglobulins are composed of two identical heavy chains and two identical light chains; disulfide-linked.

The protein resides in the secreted. It is found in the cell membrane. V region of the variable domain of immunoglobulin light chains that participates in the antigen recognition. Immunoglobulins, also known as antibodies, are membrane-bound or secreted glycoproteins produced by B lymphocytes. In the recognition phase of humoral immunity, the membrane-bound immunoglobulins serve as receptors which, upon binding of a specific antigen, trigger the clonal expansion and differentiation of B lymphocytes into immunoglobulins-secreting plasma cells. Secreted immunoglobulins mediate the effector phase of humoral immunity, which results in the elimination of bound antigens. The antigen binding site is formed by the variable domain of one heavy chain, together with that of its associated light chain. Thus, each immunoglobulin has two antigen binding sites with remarkable affinity for a particular antigen. The variable domains are assembled by a process called V-(D)-J rearrangement and can then be subjected to somatic hypermutations which, after exposure to antigen and selection, allow affinity maturation for a particular antigen. This is Immunoglobulin kappa variable 1D-17 from Homo sapiens (Human).